A 327-amino-acid chain; its full sequence is MSATLRFGEGNLQYDAQGRLRHLLSTEGLRERELLQILDTAESFLSIANRSVKKTPTLRGRTIANLFFENSTRTRSTFELAAKRLSADVLNIAVSTSSASKGESLTDTIDNLMAMQVDGFVIRHPEAGAAHLVARHLGDSALVVNAGDGQHAHPTQALLDVFTIRRLGGPIEDRVVAIVGDVFHSRVARSQIHALSVLGCPEIRVIGPRTLVPEELSALGVHVYHDLQAGLRGVDVICALRLQRERMESHRLPSLDEFHRRFGLTPERLQWAEPGALVLHPGPMNRGVEIASEVADGAQAVILQQVAHGLAVRMAVLAILAGAAGGA.

Carbamoyl phosphate-binding residues include Arg-73 and Thr-74. Residue Lys-101 coordinates L-aspartate. The carbamoyl phosphate site is built by Arg-123, His-153, and Gln-156. Residues Arg-186 and Arg-241 each coordinate L-aspartate. Residues Gly-282 and Pro-283 each coordinate carbamoyl phosphate.

Belongs to the aspartate/ornithine carbamoyltransferase superfamily. ATCase family. As to quaternary structure, heterododecamer (2C3:3R2) of six catalytic PyrB chains organized as two trimers (C3), and six regulatory PyrI chains organized as three dimers (R2).

The enzyme catalyses carbamoyl phosphate + L-aspartate = N-carbamoyl-L-aspartate + phosphate + H(+). It participates in pyrimidine metabolism; UMP biosynthesis via de novo pathway; (S)-dihydroorotate from bicarbonate: step 2/3. In terms of biological role, catalyzes the condensation of carbamoyl phosphate and aspartate to form carbamoyl aspartate and inorganic phosphate, the committed step in the de novo pyrimidine nucleotide biosynthesis pathway. This chain is Aspartate carbamoyltransferase catalytic subunit, found in Acidithiobacillus ferrooxidans (strain ATCC 23270 / DSM 14882 / CIP 104768 / NCIMB 8455) (Ferrobacillus ferrooxidans (strain ATCC 23270)).